Reading from the N-terminus, the 229-residue chain is Galactonate operon transcriptional repressor (229 aa).

The 71-residue stretch at 1–71 (MTLNKTDRIV…RYRGAFVAPR (71 aa)) folds into the HTH gntR-type domain. Positions 31 to 50 (EAELCEEFATSRNIIREVFR) form a DNA-binding region, H-T-H motif. Residues D146, H150, and H195 each coordinate Zn(2+).

In terms of assembly, homodimer.

D-galactonate binds DgoR and induces a conformational change in the protein, which decreases its affinity for DNA and consequently derepresses transcription of the dgoRKADT operon. Its function is as follows. Involved in the regulation of D-galactonate metabolism. Represses the expression of the dgoRKADT operon by binding to two closely spaced inverted repeats in the cis-acting element, which overlap with the D-galactonate responsive dgo promoter. Employs a derepression mechanism using D-galactonate as a specific effector molecule. The polypeptide is Galactonate operon transcriptional repressor (Escherichia coli (strain K12)).